Reading from the N-terminus, the 435-residue chain is 3-ketoacyl-CoA thiolase (435 aa).

The active-site Acyl-thioester intermediate is cysteine 98. Residues histidine 391 and cysteine 421 each act as proton acceptor in the active site.

The protein belongs to the thiolase-like superfamily. Thiolase family. Heterotetramer of two alpha chains (FadJ) and two beta chains (FadI).

It localises to the cytoplasm. The catalysed reaction is an acyl-CoA + acetyl-CoA = a 3-oxoacyl-CoA + CoA. The protein operates within lipid metabolism; fatty acid beta-oxidation. Catalyzes the final step of fatty acid oxidation in which acetyl-CoA is released and the CoA ester of a fatty acid two carbons shorter is formed. The chain is 3-ketoacyl-CoA thiolase from Vibrio vulnificus (strain CMCP6).